The following is a 256-amino-acid chain: Tryptophan synthase alpha chain (256 aa).

Active-site proton acceptor residues include glutamate 51 and aspartate 62.

The protein belongs to the TrpA family. As to quaternary structure, tetramer of two alpha and two beta chains.

It carries out the reaction (1S,2R)-1-C-(indol-3-yl)glycerol 3-phosphate + L-serine = D-glyceraldehyde 3-phosphate + L-tryptophan + H2O. Its pathway is amino-acid biosynthesis; L-tryptophan biosynthesis; L-tryptophan from chorismate: step 5/5. The alpha subunit is responsible for the aldol cleavage of indoleglycerol phosphate to indole and glyceraldehyde 3-phosphate. The sequence is that of Tryptophan synthase alpha chain from Solidesulfovibrio magneticus (strain ATCC 700980 / DSM 13731 / RS-1) (Desulfovibrio magneticus).